Reading from the N-terminus, the 163-residue chain is Protein-export protein SecB (163 aa).

The protein belongs to the SecB family. As to quaternary structure, homotetramer, a dimer of dimers. One homotetramer interacts with 1 SecA dimer.

Its subcellular location is the cytoplasm. In terms of biological role, one of the proteins required for the normal export of preproteins out of the cell cytoplasm. It is a molecular chaperone that binds to a subset of precursor proteins, maintaining them in a translocation-competent state. It also specifically binds to its receptor SecA. This is Protein-export protein SecB from Burkholderia ambifaria (strain MC40-6).